A 621-amino-acid chain; its full sequence is Chaperone protein HtpG (621 aa).

The a; substrate-binding stretch occupies residues 1 to 325 (MTDASVKETF…SQDLSLNVSR (325 aa)). The tract at residues 326–541 (EMLQSDPKLA…EGDIDVNLER (216 aa)) is b. The c stretch occupies residues 542–621 (MLKRHGQLQD…RLGSVMDSAL (80 aa)).

It belongs to the heat shock protein 90 family. As to quaternary structure, homodimer.

The protein localises to the cytoplasm. Molecular chaperone. Has ATPase activity. This chain is Chaperone protein HtpG, found in Roseobacter denitrificans (strain ATCC 33942 / OCh 114) (Erythrobacter sp. (strain OCh 114)).